Consider the following 61-residue polypeptide: Large ribosomal subunit protein bL32 (61 aa).

Over residues 1–16 the composition is skewed to basic residues; sequence MAVPKRKTSPSRRGMR. The interval 1–44 is disordered; the sequence is MAVPKRKTSPSRRGMRRSADALKAPTYVEDKDSGELRRPHHIDL. The segment covering 28 to 44 has biased composition (basic and acidic residues); it reads VEDKDSGELRRPHHIDL.

It belongs to the bacterial ribosomal protein bL32 family.

The sequence is that of Large ribosomal subunit protein bL32 from Methylobacterium nodulans (strain LMG 21967 / CNCM I-2342 / ORS 2060).